We begin with the raw amino-acid sequence, 749 residues long: Signal transducer and activator of transcription 4 (749 aa).

Positions 570-665 (WIDGYIMGFV…ENPLKYLYPD (96 aa)) constitute an SH2 domain. The residue at position 668 (lysine 668) is an N6-acetyllysine. A Phosphotyrosine; by JAK modification is found at tyrosine 694. Phosphoserine is present on serine 722.

The protein belongs to the transcription factor STAT family. As to quaternary structure, forms a homodimer or a heterodimer with a related family member. Interacts with ARL2BP. Interacts with STAT1. Interacts with JUN; this complex efficiently interacts with the AP-1-related sequence of the IFN-gamma promoter. Post-translationally, acetylation at Lys-668 is required for JAK2-mediated phosphorylation and activation of STAT4. Tyrosine phosphorylated upon IL12 and IFN-alpha activation, but not by IFN-gamma in T-lymphocytes and NK cells. Serine phosphorylation is required for maximal transcriptional activity but not for DNA binding. Phosphorylation by MAP2K6 at Ser-722 is required for full transcriptional activity induced by IL12. However this serine phosphorylation is not required for cell proliferation although critical for IFN-gamma production. As to expression, expression is restricted to testis, thymus, and spleen.

The protein localises to the cytoplasm. The protein resides in the nucleus. Functionally, transcriptional regulator mainly expressed in hematopoietic cells that plays a critical role in cellular growth, differentiation and immune response. Plays a key role in the differentiation of T-helper 1 cells and the production of interferon-gamma. Also participates in multiple neutrophil functions including chemotaxis and production of the neutrophil extracellular traps. After IL12 binding to its receptor IL12RB2, STAT4 interacts with the intracellular domain of IL12RB2 and becomes tyrosine phosphorylated. Phosphorylated STAT4 then homodimerizes and migrates to the nucleus where it can recognize STAT target sequences present in IL12 responsive genes. Although IL12 appears to be the predominant activating signal, STAT4 can also be phosphorylated and activated in response to IFN-gamma stimulation via JAK1 and TYK2 and in response to different interleukins including IL23, IL2 and IL35. Transcription activation of IFN-gamma gene is mediated by interaction with JUN that forms a complex that efficiently interacts with the AP-1-related sequence of the IFN-gamma promoter. In response to IFN-alpha/beta signaling, acts as a transcriptional repressor and suppresses IL5 and IL13 mRNA expression during response to T-cell receptor (TCR) activation. The polypeptide is Signal transducer and activator of transcription 4 (Stat4) (Mus musculus (Mouse)).